Reading from the N-terminus, the 62-residue chain is Large ribosomal subunit protein uL29 (62 aa).

It belongs to the universal ribosomal protein uL29 family.

The chain is Large ribosomal subunit protein uL29 from Geobacter sulfurreducens (strain ATCC 51573 / DSM 12127 / PCA).